A 321-amino-acid chain; its full sequence is Lipoyl synthase (321 aa).

7 residues coordinate [4Fe-4S] cluster: C68, C73, C79, C94, C98, C101, and S308. Residues F80 to T297 enclose the Radical SAM core domain.

Belongs to the radical SAM superfamily. Lipoyl synthase family. Requires [4Fe-4S] cluster as cofactor.

The protein resides in the cytoplasm. The enzyme catalyses [[Fe-S] cluster scaffold protein carrying a second [4Fe-4S](2+) cluster] + N(6)-octanoyl-L-lysyl-[protein] + 2 oxidized [2Fe-2S]-[ferredoxin] + 2 S-adenosyl-L-methionine + 4 H(+) = [[Fe-S] cluster scaffold protein] + N(6)-[(R)-dihydrolipoyl]-L-lysyl-[protein] + 4 Fe(3+) + 2 hydrogen sulfide + 2 5'-deoxyadenosine + 2 L-methionine + 2 reduced [2Fe-2S]-[ferredoxin]. Its pathway is protein modification; protein lipoylation via endogenous pathway; protein N(6)-(lipoyl)lysine from octanoyl-[acyl-carrier-protein]: step 2/2. Functionally, catalyzes the radical-mediated insertion of two sulfur atoms into the C-6 and C-8 positions of the octanoyl moiety bound to the lipoyl domains of lipoate-dependent enzymes, thereby converting the octanoylated domains into lipoylated derivatives. The polypeptide is Lipoyl synthase (Shewanella putrefaciens (strain CN-32 / ATCC BAA-453)).